Consider the following 492-residue polypeptide: Ribose import ATP-binding protein RbsA (492 aa).

ABC transporter domains lie at 3-239 (IDMR…VGRK) and 238-492 (RKLE…TGGK). ATP is bound at residue 35-42 (GENGAGKS).

This sequence belongs to the ABC transporter superfamily. Ribose importer (TC 3.A.1.2.1) family. In terms of assembly, the complex is composed of an ATP-binding protein (RbsA), two transmembrane proteins (RbsC) and a solute-binding protein (RbsB).

It is found in the cell membrane. The enzyme catalyses D-ribose(out) + ATP + H2O = D-ribose(in) + ADP + phosphate + H(+). Functionally, part of the ABC transporter complex RbsABC involved in ribose import. Responsible for energy coupling to the transport system. The chain is Ribose import ATP-binding protein RbsA from Streptococcus agalactiae serotype Ia (strain ATCC 27591 / A909 / CDC SS700).